The primary structure comprises 240 residues: Proteasome subunit alpha (240 aa).

The protein belongs to the peptidase T1A family. In terms of assembly, the 20S proteasome core is composed of 14 alpha and 14 beta subunits that assemble into four stacked heptameric rings, resulting in a barrel-shaped structure. The two inner rings, each composed of seven catalytic beta subunits, are sandwiched by two outer rings, each composed of seven alpha subunits. The catalytic chamber with the active sites is on the inside of the barrel. Has a gated structure, the ends of the cylinder being occluded by the N-termini of the alpha-subunits. Is capped at one or both ends by the proteasome regulatory ATPase, PAN.

It localises to the cytoplasm. Its activity is regulated as follows. The formation of the proteasomal ATPase PAN-20S proteasome complex, via the docking of the C-termini of PAN into the intersubunit pockets in the alpha-rings, triggers opening of the gate for substrate entry. Interconversion between the open-gate and close-gate conformations leads to a dynamic regulation of the 20S proteasome proteolysis activity. In terms of biological role, component of the proteasome core, a large protease complex with broad specificity involved in protein degradation. This is Proteasome subunit alpha from Metallosphaera sedula (strain ATCC 51363 / DSM 5348 / JCM 9185 / NBRC 15509 / TH2).